Here is a 443-residue protein sequence, read N- to C-terminus: Chromosomal replication initiator protein DnaA (443 aa).

The interval 1–75 (MNTQLNEIWQ…AIKQVTFKEY (75 aa)) is domain I, interacts with DnaA modulators. Residues 75–105 (YEIAFIVPSQENLNKLTKQTESAGNEDSPLS) are domain II. The tract at residues 106–321 (VLNPKYTFDT…GALNRVIAYS (216 aa)) is domain III, AAA+ region. The ATP site is built by Gly-150, Gly-152, Lys-153, and Thr-154. The domain IV, binds dsDNA stretch occupies residues 322-443 (SLTENEITVE…SEIKRNLLGK (122 aa)).

Belongs to the DnaA family. Oligomerizes as a right-handed, spiral filament on DNA at oriC.

It is found in the cytoplasm. Its function is as follows. Plays an essential role in the initiation and regulation of chromosomal replication. ATP-DnaA binds to the origin of replication (oriC) to initiate formation of the DNA replication initiation complex once per cell cycle. Binds the DnaA box (a 9 base pair repeat at the origin) and separates the double-stranded (ds)DNA. Forms a right-handed helical filament on oriC DNA; dsDNA binds to the exterior of the filament while single-stranded (ss)DNA is stabiized in the filament's interior. The ATP-DnaA-oriC complex binds and stabilizes one strand of the AT-rich DNA unwinding element (DUE), permitting loading of DNA polymerase. After initiation quickly degrades to an ADP-DnaA complex that is not apt for DNA replication. Binds acidic phospholipids. In Acetivibrio thermocellus (strain ATCC 27405 / DSM 1237 / JCM 9322 / NBRC 103400 / NCIMB 10682 / NRRL B-4536 / VPI 7372) (Clostridium thermocellum), this protein is Chromosomal replication initiator protein DnaA.